Consider the following 179-residue polypeptide: Iron sulfur cluster assembly protein 1, mitochondrial (179 aa).

Positions 160 to 179 are disordered; sequence RSVKQPTLGPEAAQAETIAT.

This sequence belongs to the NifU family. As to quaternary structure, component of the core Fe-S cluster (ISC) assembly machinery. [2Fe-2S] cluster is required as a cofactor.

Its subcellular location is the mitochondrion matrix. The protein operates within cofactor biosynthesis; iron-sulfur cluster biosynthesis. In terms of biological role, scaffold protein for the de novo synthesis of iron-sulfur (Fe-S) clusters within mitochondria, which is required for maturation of both mitochondrial and cytoplasmic [2Fe-2S] and [4Fe-4S] proteins. First, a [2Fe-2S] cluster is transiently assembled on the scaffold protein ISU1. In a second step, the cluster is released from ISU1, transferred to a glutaredoxin, followed by the formation of mitochondrial [2Fe-2S] proteins, the synthesis of [4Fe-4S] clusters and their target-specific insertion into the recipient apoproteins. Cluster assembly on ISU1 depends on the function of the cysteine desulfurase complex NFS1-ISD11, which serves as the sulfur donor for cluster synthesis, the iron-binding protein frataxin as the putative iron donor, and the electron transfer chain comprised of ferredoxin reductase and ferredoxin, which receive their electrons from NADH. The sequence is that of Iron sulfur cluster assembly protein 1, mitochondrial (ISU1) from Debaryomyces hansenii (strain ATCC 36239 / CBS 767 / BCRC 21394 / JCM 1990 / NBRC 0083 / IGC 2968) (Yeast).